We begin with the raw amino-acid sequence, 376 residues long: 26S proteasome non-ATPase regulatory subunit 4 (376 aa).

The region spanning 5 to 188 (STMVCVDNSE…LADALISSPI (184 aa)) is the VWFA domain. Lysine 122 participates in a covalent cross-link: Glycyl lysine isopeptide (Lys-Gly) (interchain with G-Cter in SUMO2). Residues 197–262 (LGLGASDFEF…TEDSDDALLK (66 aa)) form an interaction with UBQLN1 region. The UIM 1 domain maps to 211-230 (SADPELALALRVSMEEQRQR). Residues 224–237 (MEEQRQRQEEEARR) are compositionally biased toward basic and acidic residues. The tract at residues 224–257 (MEEQRQRQEEEARRAAAASAAEAGIATPGTEDSD) is disordered. Phosphothreonine occurs at positions 250 and 253. Residues serine 256 and alanine 259 each carry the phosphoserine modification. The UIM 2 domain maps to 282–301 (TEEEQIAYAMQMSLQGTEFS). The interval 355 to 376 (MGALASQATKDGKNDKKEEEKK) is disordered. Serine 360 carries the phosphoserine modification. Over residues 364–376 (KDGKNDKKEEEKK) the composition is skewed to basic and acidic residues.

This sequence belongs to the proteasome subunit S5A family. As to quaternary structure, component of the 19S proteasome regulatory particle complex. The 26S proteasome consists of a 20S core particle (CP) and two 19S regulatory subunits (RP). The regulatory particle is made of a lid composed of 9 subunits, a base containing 6 ATPases and few additional components including PSMD4. Interacts with NUB1. Interacts with SQSTM1. Interacts with UBQLN4. Interacts with UBE3A. Interacts with UBQLN1 (via ubiquitin-like domain). Interacts with DDI2. As to expression, isoform Rpn10A is ubiquitous whereas isoform Rpn10E is mostly expressed in the embryonic brain.

Functionally, component of the 26S proteasome, a multiprotein complex involved in the ATP-dependent degradation of ubiquitinated proteins. This complex plays a key role in the maintenance of protein homeostasis by removing misfolded or damaged proteins, which could impair cellular functions, and by removing proteins whose functions are no longer required. Therefore, the proteasome participates in numerous cellular processes, including cell cycle progression, apoptosis, or DNA damage repair. PSMD4 acts as an ubiquitin receptor subunit through ubiquitin-interacting motifs and selects ubiquitin-conjugates for destruction. Displays a preferred selectivity for longer polyubiquitin chains. The chain is 26S proteasome non-ATPase regulatory subunit 4 (Psmd4) from Mus musculus (Mouse).